A 904-amino-acid polypeptide reads, in one-letter code: Envelope glycoprotein B (904 aa).

Residues 1–22 (MRGGGLICALVVGALVAAVASA) form the signal peptide. At 23 to 771 (APAAPAAPRA…SGVSSFMSNP (749 aa)) the chain is on the virion surface side. A disordered region spans residues 40-83 (VAANGGPASRPPPVPSPATTKARKRKTKKPPKRPEATPPPDANA). Over residues 60-70 (KARKRKTKKPP) the composition is skewed to basic residues. Asn-82 and Asn-136 each carry an N-linked (GlcNAc...) asparagine; by host glycan. 5 disulfide bridges follow: Cys-111-Cys-570, Cys-128-Cys-526, Cys-202-Cys-266, Cys-359-Cys-407, and Cys-593-Cys-630. 2 involved in fusion and/or binding to host membrane regions span residues 168-174 (VWFGHRY) and 253-260 (RVEAFHRY). N-linked (GlcNAc...) asparagine; by host glycosylation is found at Asn-393, Asn-425, and Asn-486. Residues 467 to 490 (QDRKPRNATPAPLREAPSANASVE) form a disordered region. N-linked (GlcNAc...) asparagine; by host glycosylation occurs at Asn-671. Hydrophobic membrane proximal region stretches follow at residues 716 to 769 (IDTV…SFMS) and 728 to 768 (MFAG…SSFM). The chain crosses the membrane as a helical span at residues 772-792 (FGALAVGLLVLAGLVAAFFAF). The Intravirion portion of the chain corresponds to 793–904 (RYVLQLQRNP…EDEAGDEDEL (112 aa)). Residues 816-835 (TSDPGGVGGEGEEGAEGGGF) are disordered. The Golgi targeting signature appears at 849–852 (YMAL). Residues 883–904 (KRNKARYSPLHNEDEAGDEDEL) are disordered. The Internalization motif motif lies at 889 to 892 (YSPL).

The protein belongs to the herpesviridae glycoprotein B family. In terms of assembly, homotrimer; disulfide-linked. Binds to heparan sulfate proteoglycans. Interacts with gH/gL heterodimer.

It localises to the virion membrane. The protein resides in the host cell membrane. The protein localises to the host endosome membrane. Its subcellular location is the host Golgi apparatus membrane. Envelope glycoprotein that forms spikes at the surface of virion envelope. Essential for the initial attachment to heparan sulfate moieties of the host cell surface proteoglycans. Involved in fusion of viral and cellular membranes leading to virus entry into the host cell. Following initial binding to its host receptors, membrane fusion is mediated by the fusion machinery composed at least of gB and the heterodimer gH/gL. May be involved in the fusion between the virion envelope and the outer nuclear membrane during virion egress. The sequence is that of Envelope glycoprotein B from Homo sapiens (Human).